The primary structure comprises 57 residues: Andropin (57 aa).

A signal peptide spans Met-1 to Ala-23.

Belongs to the andropin family. As to expression, ejaculatory duct of adult males.

The protein localises to the secreted. Its function is as follows. Male-specific peptide with moderate activity against Gram-positive bacteria. In Drosophila sechellia (Fruit fly), this protein is Andropin (Anp).